Consider the following 415-residue polypeptide: Corticotropin-releasing factor receptor 1 (415 aa).

The N-terminal stretch at 1–23 is a signal peptide; the sequence is MGQRPQLRLVKALLLLGLNPVST. Residues 24-111 lie on the Extracellular side of the membrane; the sequence is SLQDQQCESL…CQEILNEEKK (88 aa). Disulfide bonds link Cys30–Cys54, Cys44–Cys87, and Cys68–Cys102. Asn38, Asn45, Asn78, Asn90, and Asn98 each carry an N-linked (GlcNAc...) asparagine glycan. An important for peptide agonist binding region spans residues 99-108; that stretch reads YSECQEILNE. A helical transmembrane segment spans residues 112-142; the sequence is SKVHYHIAVIINYLGHCISLVALLVAFVLFL. Residues 143-149 are Cytoplasmic-facing; it reads RLRSIRC. The helical transmembrane segment at 150–174 threads the bilayer; that stretch reads LRNIIHWNLISAFILRNATWFVVQL. At 175–189 the chain is on the extracellular side; the sequence is TVSPEVHQSNVAWCR. A disulfide bridge links Cys188 with Cys258. Residues 190 to 218 traverse the membrane as a helical segment; that stretch reads LVTAAYNYFHVTNFFWMFGEGCYLHTAIV. Residues 219 to 225 lie on the Cytoplasmic side of the membrane; the sequence is LTYSTDR. The helical transmembrane segment at 226-253 threads the bilayer; sequence LRKWMFVCIGWGVPFPIIVAWAIGKLYY. Topologically, residues 254–269 are extracellular; sequence DNEKCWFGKRPGVYTD. A helical membrane pass occupies residues 270–295; the sequence is YIYQGPMILVLLINFIFLFNIVRILM. An important for antagonist binding region spans residues 280 to 290; that stretch reads LLINFIFLFNI. Residues 296–306 are Cytoplasmic-facing; sequence TKLRASTTSET. A Phosphoserine; by PKA modification is found at Ser301. Residues 307 to 331 form a helical membrane-spanning segment; that stretch reads IQYRKAVKATLVLLPLLGITYMLFF. At 332 to 338 the chain is on the extracellular side; the sequence is VNPGEDE. The chain crosses the membrane as a helical span at residues 339-368; it reads VSRVVFIYFNSFLESFQGFFVSVFYCFLNS. Topologically, residues 369–415 are cytoplasmic; the sequence is EVRSAIRKRWRRWQDKHSIRARVARAMSIPTSPTRVSFHSIKQSTAV.

Belongs to the G-protein coupled receptor 2 family. Heterodimer; heterodimerizes with GPER1. Interacts (via N-terminal extracellular domain) with CRH and UCN. Interacts with DLG1; this inhibits endocytosis of CRHR1 after agonist binding. In terms of processing, C-terminal Ser or Thr residues may be phosphorylated. Post-translationally, phosphorylation at Ser-301 by PKA prevents maximal coupling to Gq-protein, and thereby negatively regulates downstream signaling. Detected in brain cortex (at protein level).

It is found in the cell membrane. The protein resides in the endosome. In terms of biological role, G-protein coupled receptor for CRH (corticotropin-releasing factor) and UCN (urocortin). Has high affinity for CRH and UCN. Ligand binding causes a conformation change that triggers signaling via guanine nucleotide-binding proteins (G proteins) and down-stream effectors, such as adenylate cyclase. Promotes the activation of adenylate cyclase, leading to increased intracellular cAMP levels. Inhibits the activity of the calcium channel CACNA1H. Required for normal embryonic development of the adrenal gland and for normal hormonal responses to stress. Plays a role in the response to anxiogenic stimuli. This chain is Corticotropin-releasing factor receptor 1 (Crhr1), found in Mus musculus (Mouse).